The chain runs to 330 residues: Ferredoxin--NADP reductase (330 aa).

FAD contacts are provided by Thr19, Asp38, Gln46, Tyr51, Ala91, Phe129, Asp286, and Ser327.

It belongs to the ferredoxin--NADP reductase type 2 family. As to quaternary structure, homodimer. FAD serves as cofactor.

The catalysed reaction is 2 reduced [2Fe-2S]-[ferredoxin] + NADP(+) + H(+) = 2 oxidized [2Fe-2S]-[ferredoxin] + NADPH. This is Ferredoxin--NADP reductase from Nocardioides sp. (strain ATCC BAA-499 / JS614).